The primary structure comprises 660 residues: MGLQTAKWPSHGTFVLKFWLIMSLGLYSHVSKLLACPSVCRCDRNFVYCNERSLTSVPLGIPEGVTVLYLHNNQINNAGFPAELHNVQSVHTVYLYGNQLDEFPMNLPKNVRVLHLQENNIQTISRAALAQLLKLEELHLDDNSISTVGVEDGAFREAISLKLLFLSKNHLSSVPVGLPVDLQELRVDENRIAVISDMAFQNLTSLERLIVDGNLLTNKGIADGTFSHLTKLKEFSIVRNSLSHPPPDLPGTHLIRLYLQDNQINHIPLTAFANLRKLERLDISNNQLRMLTQGVFDHLSNLKQLTARNNPWFCDCSIKWVTEWLKYIPSSLNVRGFMCQGPEQVRGMAVRELNMNLLSCPTTTPGLPVFTPAPSTVSPTTQSPTVSVPSPSRGSVPPAPAPSKLPTIPDWDGRERATPPISERIQLSIHFVNDTSIQVSWLSLFTVMAYKLTWVKMGHSLVGGIVQERIVSGEKQHLSLVNLEPRSTYRICLVPLDAFNYRTVEDTICSEATTHASYLNNGSNTASSHEQTTSHTMGSPFLLAGLIGGAVIFVLVVLLSVFCWHMHKKGRYTSQKWKYNRGRRKDDYCEAGTKKDNSILEMTETSFQIVSLNNDQLLKGDFRLQPIYTPNGGINYTDCHIPNNMRYCNSSVPDLEHCHT.

Positions 1-35 (MGLQTAKWPSHGTFVLKFWLIMSLGLYSHVSKLLA) are cleaved as a signal peptide. 2 disulfide bridges follow: cysteine 36–cysteine 42 and cysteine 40–cysteine 49. Residues 36–67 (CPSVCRCDRNFVYCNERSLTSVPLGIPEGVTV) form the LRRNT domain. Topologically, residues 36–540 (CPSVCRCDRN…QTTSHTMGSP (505 aa)) are extracellular. LRR repeat units follow at residues 62-87 (PEGVTVLYLHNNQINNAGFPAELHNV), 88-108 (QSVHTVYLYGNQLDEFPMNLP), 109-131 (KNVRVLHLQENNIQTISRAALAQ), 132-157 (LLKLEELHLDDNSISTVGVEDGAFRE), 159-181 (ISLKLLFLSKNHLSSVPVGLPVD), 183-202 (QELRVDENRIAVISDMAFQN), 203-228 (LTSLERLIVDGNLLTNKGIADGTFSH), 229-251 (LTKLKEFSIVRNSLSHPPPDLPG), 252-274 (THLIRLYLQDNQINHIPLTAFAN), and 275-298 (LRKLERLDISNNQLRMLTQGVFDH). N-linked (GlcNAc...) asparagine glycosylation is present at asparagine 202. Disulfide bonds link cysteine 314/cysteine 339 and cysteine 316/cysteine 360. One can recognise an LRRCT domain in the interval 338-361 (MCQGPEQVRGMAVRELNMNLLSCP). Over residues 372-396 (PAPSTVSPTTQSPTVSVPSPSRGSV) the composition is skewed to low complexity. The interval 372–413 (PAPSTVSPTTQSPTVSVPSPSRGSVPPAPAPSKLPTIPDWDG) is disordered. The 99-residue stretch at 419–517 (PPISERIQLS…ICSEATTHAS (99 aa)) folds into the Fibronectin type-III domain. A helical membrane pass occupies residues 541 to 561 (FLLAGLIGGAVIFVLVVLLSV). The Cytoplasmic segment spans residues 562-660 (FCWHMHKKGR…SVPDLEHCHT (99 aa)).

As to quaternary structure, self-associates (via leucine-rich repeats), giving rise to homooligomers. Interacts with FGFR1. Interacts with FGFR2. Interacts (via extracellular domain) with ADGRL1/LPHN1. Interacts (via extracellular domain) with ADGRL3 (via olfactomedin-like domain). Interacts (via extracellular domain) with UNC5D (via the first Ig-like domain). Can also interact (via extracellular domain) with UNC5B, but with much lower affinity. Interacts (via extracellular domain) with FN1. In terms of processing, N-glycosylated. Proteolytic cleavage in the juxtamembrane region gives rise to a soluble ectodomain. Cleavage is probably effected by a metalloprotease. Detected in brain (at protein level).

The protein localises to the cell membrane. It is found in the endoplasmic reticulum membrane. The protein resides in the synapse. It localises to the synaptosome. Its subcellular location is the cell junction. The protein localises to the focal adhesion. It is found in the secreted. The protein resides in the extracellular space. It localises to the extracellular matrix. Its subcellular location is the microsome membrane. Functions in cell-cell adhesion, cell migration and axon guidance. Mediates cell-cell adhesion via its interactions with ADGRL3 and probably also other latrophilins that are expressed at the surface of adjacent cells. May play a role in the migration of cortical neurons during brain development via its interaction with UNC5D. Mediates axon growth cone collapse and plays a repulsive role in neuron guidance via its interaction with UNC5D, and possibly also other UNC-5 family members. Plays a role in fibroblast growth factor-mediated signaling cascades. Required for normal organization of the cardiac basement membrane during embryogenesis, and for normal embryonic epicardium and heart morphogenesis. This chain is Leucine-rich repeat transmembrane protein FLRT2, found in Rattus norvegicus (Rat).